Reading from the N-terminus, the 742-residue chain is Polyphosphate kinase (742 aa).

Asparagine 91 contributes to the ATP binding site. Mg(2+) is bound by residues arginine 431 and arginine 461. The Phosphohistidine intermediate role is filled by histidine 491. ATP is bound by residues tyrosine 524, arginine 624, and histidine 652. The tract at residues 718 to 742 (WTASPQEGHSVRDHQESLMERHRSP) is disordered. A compositionally biased stretch (basic and acidic residues) spans 726–742 (HSVRDHQESLMERHRSP).

This sequence belongs to the polyphosphate kinase 1 (PPK1) family. It depends on Mg(2+) as a cofactor. In terms of processing, an intermediate of this reaction is the autophosphorylated ppk in which a phosphate is covalently linked to a histidine residue through a N-P bond.

It carries out the reaction [phosphate](n) + ATP = [phosphate](n+1) + ADP. Catalyzes the reversible transfer of the terminal phosphate of ATP to form a long-chain polyphosphate (polyP). The chain is Polyphosphate kinase from Mycobacterium bovis (strain ATCC BAA-935 / AF2122/97).